The following is a 777-amino-acid chain: Dynamin-like protein ARC5 (777 aa).

The Dynamin-type G domain occupies 45–343; that stretch reads PFEAPAVLVV…LWKRYKESVP (299 aa). The segment at 55–62 is G1 motif; that stretch reads GQQTDGKS. Position 55–62 (55–62) interacts with GTP; sequence GQQTDGKS. The interval 81 to 83 is G2 motif; the sequence is KTR. The tract at residues 160–163 is G3 motif; that stretch reads DTPG. Residues 160 to 164 and 231 to 234 each bind GTP; these read DTPGL and TKLD. A G4 motif region spans residues 231–234; sequence TKLD. Residues 265-268 are G5 motif; the sequence is SPFF. Coiled-coil stretches lie at residues 300-320 and 728-765; these read EDIA…EKSR and NLRQ…NSHE.

The protein belongs to the TRAFAC class dynamin-like GTPase superfamily. Dynamin/Fzo/YdjA family. Forms a homodimer and heterodimers with DRP3A and DRP3B on peroxisomes. Also interacts with FIS1A (but not FIS1B) and PEX11 proteins (PEX11A, PEX11B, PEX11C, PEX11D and PEX11E) on peroxisomes. Interacts with PDV1 and PDV2. Stabilized at the plastid outer envelope membranes (OEMs) in the constriction site when in complex with GTP, but destabilized after conversion of GTP into GDP leading to turnover with a cytosolic pool.

It localises to the cytoplasm. The protein resides in the plastid. Its subcellular location is the chloroplast outer membrane. The protein localises to the peroxisome. It is found in the cytosol. It catalyses the reaction GTP + H2O = GDP + phosphate + H(+). GTPase activity is repressed by PDV2 thus increasing stability at the plastid outer envelope membranes (OEMs) periphery. Mechanochemical GTPase component of both plastid and peroxisome division machinery. Required for the last steps of plastid division specifically in mesophyll-cell, when the narrow isthmus breaks, facilitating the separation of the daughter plastids. Necessary for peroxisome activities. Seems to influence stromule (stroma-filled tubular extensions of the plastid envelope membrane) length and frequency. This chain is Dynamin-like protein ARC5, found in Arabidopsis thaliana (Mouse-ear cress).